Here is a 224-residue protein sequence, read N- to C-terminus: Cytidylate kinase (224 aa).

ATP is bound at residue 11-19 (GPAAAGKST).

This sequence belongs to the cytidylate kinase family. Type 1 subfamily.

The protein resides in the cytoplasm. It carries out the reaction CMP + ATP = CDP + ADP. The enzyme catalyses dCMP + ATP = dCDP + ADP. The chain is Cytidylate kinase from Listeria monocytogenes serotype 4b (strain CLIP80459).